Reading from the N-terminus, the 437-residue chain is UDP-N-acetylmuramate--L-alanine ligase (437 aa).

114-120 contacts ATP; the sequence is GTHGKTS.

This sequence belongs to the MurCDEF family.

It is found in the cytoplasm. It catalyses the reaction UDP-N-acetyl-alpha-D-muramate + L-alanine + ATP = UDP-N-acetyl-alpha-D-muramoyl-L-alanine + ADP + phosphate + H(+). It functions in the pathway cell wall biogenesis; peptidoglycan biosynthesis. Cell wall formation. The polypeptide is UDP-N-acetylmuramate--L-alanine ligase (Lactobacillus johnsonii (strain CNCM I-12250 / La1 / NCC 533)).